A 226-amino-acid polypeptide reads, in one-letter code: Flagellar L-ring protein (226 aa).

The signal sequence occupies residues 1-15 (MKRLAVSILCLALAG). Cysteine 16 is lipidated: N-palmitoyl cysteine. Cysteine 16 carries the S-diacylglycerol cysteine lipid modification.

This sequence belongs to the FlgH family. The basal body constitutes a major portion of the flagellar organelle and consists of four rings (L,P,S, and M) mounted on a central rod.

The protein resides in the cell outer membrane. The protein localises to the bacterial flagellum basal body. Assembles around the rod to form the L-ring and probably protects the motor/basal body from shearing forces during rotation. This chain is Flagellar L-ring protein, found in Geobacter metallireducens (strain ATCC 53774 / DSM 7210 / GS-15).